The following is a 380-amino-acid chain: Probable inactive dehydrogenase easA (380 aa).

FMN-binding positions include 25–27 (PMT), alanine 60, glutamine 102, and histidine 171. Histidine 171 and asparagine 174 together coordinate substrate. Residues lysine 223, glycine 299, 324–325 (GR), and arginine 325 contribute to the FMN site. A substrate-binding site is contributed by tyrosine 352.

The protein belongs to the NADH:flavin oxidoreductase/NADH oxidase family.

In terms of biological role, probable inactive dehydrogenase; part of the gene cluster that mediates the biosynthesis of fungal ergot alkaloid. DmaW catalyzes the first step of ergot alkaloid biosynthesis by condensing dimethylallyl diphosphate (DMAP) and tryptophan to form 4-dimethylallyl-L-tryptophan. The second step is catalyzed by the methyltransferase easF that methylates 4-dimethylallyl-L-tryptophan in the presence of S-adenosyl-L-methionine, resulting in the formation of 4-dimethylallyl-L-abrine. The catalase easC and the FAD-dependent oxidoreductase easE then transform 4-dimethylallyl-L-abrine to chanoclavine-I which is further oxidized by easD in the presence of NAD(+), resulting in the formation of chanoclavine-I aldehyde. Agroclavine dehydrogenase easG then mediates the conversion of chanoclavine-I aldehyde to agroclavine via a non-enzymatic adduct reaction: the substrate is an iminium intermediate that is formed spontaneously from chanoclavine-I aldehyde in the presence of glutathione. The presence of easA is not required to complete this reaction. Further conversion of agroclavine to paspalic acid is a two-step process involving oxidation of agroclavine to elymoclavine and of elymoclavine to paspalic acid, the second step being performed by the elymoclavine oxidase cloA. Paspalic acid is then further converted to D-lysergic acid. Ergopeptines are assembled from D-lysergic acid and three different amino acids by the D-lysergyl-peptide-synthetases composed each of a monomudular and a trimodular nonribosomal peptide synthetase subunit. LpsB and lpsC encode the monomodular subunits responsible for D-lysergic acid activation and incorporation into the ergopeptine backbone. LpsA1 and A2 subunits encode the trimodular nonribosomal peptide synthetase assembling the tripeptide portion of ergopeptines. LpsA1 is responsible for formation of the major ergopeptine, ergotamine, and lpsA2 for alpha-ergocryptine, the minor ergopeptine of the total alkaloid mixture elaborated by C.purpurea. D-lysergyl-tripeptides are assembled by the nonribosomal peptide synthetases and released as N-(D-lysergyl-aminoacyl)-lactams. Cyclolization of the D-lysergyl-tripeptides is performed by the Fe(2+)/2-ketoglutarate-dependent dioxygenase easH which introduces a hydroxyl group into N-(D-lysergyl-aminoacyl)-lactam at alpha-C of the aminoacyl residue followed by spontaneous condensation with the terminal lactam carbonyl group. The sequence is that of Probable inactive dehydrogenase easA from Claviceps purpurea (Ergot fungus).